The sequence spans 308 residues: Mycothiol acetyltransferase (308 aa).

N-acetyltransferase domains are found at residues 12 to 149 (DVLD…RPLG) and 165 to 308 (VTVR…RTET). Glu-43 contributes to the 1D-myo-inositol 2-(L-cysteinylamino)-2-deoxy-alpha-D-glucopyranoside binding site. An acetyl-CoA-binding site is contributed by 88–90 (LVV). 3 residues coordinate 1D-myo-inositol 2-(L-cysteinylamino)-2-deoxy-alpha-D-glucopyranoside: Glu-192, Lys-231, and Glu-240. Residues 244 to 246 (VGV) and 251 to 257 (QGGGLGR) each bind acetyl-CoA. A 1D-myo-inositol 2-(L-cysteinylamino)-2-deoxy-alpha-D-glucopyranoside-binding site is contributed by Tyr-278.

This sequence belongs to the acetyltransferase family. MshD subfamily. As to quaternary structure, monomer.

It catalyses the reaction 1D-myo-inositol 2-(L-cysteinylamino)-2-deoxy-alpha-D-glucopyranoside + acetyl-CoA = mycothiol + CoA + H(+). Functionally, catalyzes the transfer of acetyl from acetyl-CoA to desacetylmycothiol (Cys-GlcN-Ins) to form mycothiol. The polypeptide is Mycothiol acetyltransferase (Streptomyces bingchenggensis (strain BCW-1)).